A 622-amino-acid chain; its full sequence is Palmitoyltransferase ZDHHC17 (622 aa).

The Cytoplasmic portion of the chain corresponds to 1–294; sequence MADGPDEYDT…LKADKEFRQK (294 aa). Residues 1-295 are necessary and sufficient for interaction with DNAJC5 and SNAP25; it reads MADGPDEYDT…KADKEFRQKV (295 aa). ANK repeat units follow at residues 41 to 76, 79 to 108, 113 to 142, 146 to 175, 179 to 209, 214 to 243, and 247 to 276; these read THVD…VRQP, ENVT…IVDQ, LNST…DPSL, EGCS…DVDM, NGMT…SVNL, HKNT…NVDA, and KGES…AKGY. 2 helical membrane-spanning segments follow: residues 295–315 and 316–336; these read VMLG…DLNI and DSWL…QFLS. Over 337-347 the chain is Lumenal; sequence KSFFDHSMHSA. Residues 348–368 traverse the membrane as a helical segment; it reads LPLGIYLATKFWMYVTWFFWF. Residues 369 to 371 lie on the Cytoplasmic side of the membrane; the sequence is WND. Residues 372–392 traverse the membrane as a helical segment; that stretch reads LSFLSIHLPFLANSVALFYNF. Over 393-470 the chain is Lumenal; it reads GKSWKSDPGI…GNCVGAGNHR (78 aa). Residues 427–477 enclose the DHHC domain; the sequence is IFCSTCLIRKPVRSKHCGVCNRCIAKFDHHCPWVGNCVGAGNHRYFMGYLF. Catalysis depends on C457, which acts as the S-palmitoyl cysteine intermediate. A helical transmembrane segment spans residues 471 to 491; that stretch reads YFMGYLFFLLFMICWMIYGCV. Residues 492–506 lie on the Cytoplasmic side of the membrane; that stretch reads SYWGLHCETTYTKDG. A helical membrane pass occupies residues 507–526; that stretch reads FWTYITQIATCSPWMFWMFL. Residues 527–529 are Lumenal-facing; the sequence is NSV. The helical transmembrane segment at 530–552 threads the bilayer; the sequence is FHFMWVAVLLMCQMYQITCLGIT. Over 553 to 622 the chain is Cytoplasmic; the sequence is TNERMNARRY…QISGSGYQLV (70 aa).

Belongs to the DHHC palmitoyltransferase family. AKR/ZDHHC17 subfamily. Interacts (via ANK repeats) with numerous proteins (via the consensus sequence motif [VIAP]-[VIT]-x-x-Q-P). Interacts (via ANK repeats) with CLIP3. Interacts (via ANK repeats) with HTT. Interacts (via ANK repeats) with DNAJC5 (via C-terminus). Interacts (via ANK repeats) with MAP6. Interacts (via ANK repeats) with SNAP23. Interacts (via ANK repeats) with SNAP25. Interacts (via ANK repeats) with EVL. Interacts with SPRED1 and SPRED3. Interacts with GPM6A and OPTN. May interact (via ANK repeats) with SPRED2. May interact with NTRK1; may regulate its localization and function. Autopalmitoylated. Autopalmitoylation has a regulatory role in ZDHHC17-mediated Mg(2+) transport.

The protein resides in the golgi apparatus membrane. It localises to the cytoplasmic vesicle membrane. It is found in the presynaptic cell membrane. The catalysed reaction is L-cysteinyl-[protein] + hexadecanoyl-CoA = S-hexadecanoyl-L-cysteinyl-[protein] + CoA. It catalyses the reaction L-cysteinyl-[protein] + tetradecanoyl-CoA = S-tetradecanoyl-L-cysteinyl-[protein] + CoA. It carries out the reaction L-cysteinyl-[protein] + octadecanoyl-CoA = S-octadecanoyl-L-cysteinyl-[protein] + CoA. In terms of biological role, palmitoyltransferase that catalyzes the addition of palmitate onto various protein substrates and is involved in a variety of cellular processes. Has no stringent fatty acid selectivity and in addition to palmitate can also transfer onto target proteins myristate from tetradecanoyl-CoA and stearate from octadecanoyl-CoA. Palmitoyltransferase specific for a subset of neuronal proteins, including SNAP25, DLG4/PSD95, GAD2, SYT1 and HTT. Also palmitoylates neuronal protein GPM6A as well as SPRED1 and SPRED3. Could also play a role in axonogenesis through the regulation of NTRK1 and the downstream ERK1/ERK2 signaling cascade. May be involved in the sorting or targeting of critical proteins involved in the initiating events of endocytosis at the plasma membrane. May play a role in Mg(2+) transport. Could also palmitoylate DNAJC5 and regulate its localization to the Golgi membrane. Palmitoylates CASP6, thereby preventing its dimerization and subsequent activation. The polypeptide is Palmitoyltransferase ZDHHC17 (Rattus norvegicus (Rat)).